The primary structure comprises 428 residues: tRNA modification GTPase MnmE (428 aa).

Residues Arg-20, Glu-77, and Lys-117 each coordinate (6S)-5-formyl-5,6,7,8-tetrahydrofolate. Residues 213–351 (GFEVAIIGPP…LVQRISDVLK (139 aa)) enclose the TrmE-type G domain. A K(+)-binding site is contributed by Asn-223. GTP is bound by residues 223–228 (NAGKST), 242–248 (SEVAGTT), and 267–270 (DTAG). Ser-227 is a Mg(2+) binding site. Residues Ser-242, Val-244, and Thr-247 each contribute to the K(+) site. Thr-248 contacts Mg(2+). Residue Lys-428 coordinates (6S)-5-formyl-5,6,7,8-tetrahydrofolate.

This sequence belongs to the TRAFAC class TrmE-Era-EngA-EngB-Septin-like GTPase superfamily. TrmE GTPase family. As to quaternary structure, homodimer. Heterotetramer of two MnmE and two MnmG subunits. K(+) is required as a cofactor.

It localises to the cytoplasm. Exhibits a very high intrinsic GTPase hydrolysis rate. Involved in the addition of a carboxymethylaminomethyl (cmnm) group at the wobble position (U34) of certain tRNAs, forming tRNA-cmnm(5)s(2)U34. This chain is tRNA modification GTPase MnmE, found in Ruegeria pomeroyi (strain ATCC 700808 / DSM 15171 / DSS-3) (Silicibacter pomeroyi).